A 352-amino-acid polypeptide reads, in one-letter code: Photosystem II D2 protein (352 aa).

Threonine 2 is subject to N-acetylthreonine. Threonine 2 carries the phosphothreonine modification. A helical transmembrane segment spans residues 40–60 (CAYFALGGWLTGTTFVTSWYT). Histidine 117 is a chlorophyll a binding site. Residues 124–140 (GFMLRQFEIARSVNLRP) traverse the membrane as a helical segment. Positions 129 and 142 each coordinate pheophytin a. The helical transmembrane segment at 152 to 165 (VFVSVFLIYPLGQS) threads the bilayer. A chlorophyll a-binding site is contributed by histidine 197. Residues 207-227 (AALLCAIHGATVENTLFEDGD) form a helical membrane-spanning segment. A plastoquinone is bound by residues histidine 214 and phenylalanine 261. Position 214 (histidine 214) interacts with Fe cation. Histidine 268 is a Fe cation binding site. A helical membrane pass occupies residues 278 to 294 (GLWMSAIGVVGLALNLR).

The protein belongs to the reaction center PufL/M/PsbA/D family. As to quaternary structure, PSII is composed of 1 copy each of membrane proteins PsbA, PsbB, PsbC, PsbD, PsbE, PsbF, PsbH, PsbI, PsbJ, PsbK, PsbL, PsbM, PsbT, PsbX, PsbY, PsbZ, Psb30/Ycf12, at least 3 peripheral proteins of the oxygen-evolving complex and a large number of cofactors. It forms dimeric complexes. The cofactor is The D1/D2 heterodimer binds P680, chlorophylls that are the primary electron donor of PSII, and subsequent electron acceptors. It shares a non-heme iron and each subunit binds pheophytin, quinone, additional chlorophylls, carotenoids and lipids. There is also a Cl(-1) ion associated with D1 and D2, which is required for oxygen evolution. The PSII complex binds additional chlorophylls, carotenoids and specific lipids.. Post-translationally, phosphorylated in vitro.

The protein resides in the plastid. It localises to the chloroplast thylakoid membrane. The enzyme catalyses 2 a plastoquinone + 4 hnu + 2 H2O = 2 a plastoquinol + O2. Its function is as follows. Photosystem II (PSII) is a light-driven water:plastoquinone oxidoreductase that uses light energy to abstract electrons from H(2)O, generating O(2) and a proton gradient subsequently used for ATP formation. It consists of a core antenna complex that captures photons, and an electron transfer chain that converts photonic excitation into a charge separation. The D1/D2 (PsbA/PsbD) reaction center heterodimer binds P680, the primary electron donor of PSII as well as several subsequent electron acceptors. D2 is needed for assembly of a stable PSII complex. This Chlamydomonas reinhardtii (Chlamydomonas smithii) protein is Photosystem II D2 protein.